We begin with the raw amino-acid sequence, 133 residues long: L-ectoine synthase (133 aa).

Belongs to the ectoine synthase family.

It catalyses the reaction (2S)-4-acetamido-2-aminobutanoate = L-ectoine + H2O. It functions in the pathway amine and polyamine biosynthesis; ectoine biosynthesis; L-ectoine from L-aspartate 4-semialdehyde: step 3/3. Functionally, catalyzes the circularization of gamma-N-acetyl-alpha,gamma-diaminobutyric acid (ADABA) to ectoine (1,4,5,6-tetrahydro-2-methyl-4-pyrimidine carboxylic acid), which is an excellent osmoprotectant. This is L-ectoine synthase from Bordetella petrii (strain ATCC BAA-461 / DSM 12804 / CCUG 43448).